Reading from the N-terminus, the 587-residue chain is FAD-dependent monooxygenase ankC (587 aa).

The chain crosses the membrane as a helical span at residues 7–27; the sequence is AVDVLIIGAGPAGLIAAMWMA. The FAD site is built by Tyr245 and Asp311.

It belongs to the PheA/TfdB FAD monooxygenase family. Homodimer. FAD serves as cofactor.

It is found in the membrane. The catalysed reaction is cyclo(L-arginyl-L-dehydrotyrosyl) + AH2 + O2 = cyclo(L-arginyl-(Z)-dehydro-3,4-dihydroxytyrosyl) + A + H2O. It participates in secondary metabolite biosynthesis. In terms of biological role, FAD-dependent monooxygenase; part of the ank cluster that mediates the biosynthesis of NK13650 C, a highly modified cyclo-arginine-tyrosine dipeptide. AnkC uses as substrate the dehydro-cyclodipeptide intermediate generated by the monooxygase ankB and acts as a hydroxylase that installs the m-OH through a canonical flavin-dependent aromatic hydroxylation mechanism. Within the pathway, the cyclodipeptide synthase ankA acts as the scaffold-generating enzyme and is responsible for formation of the cyclo-Arg-Tyr diketopiperazine (cRY) from L-Arg and L-Tyr. The ankA product cRY is desaturated by the cytochrome P450 monooxygenase ankB to yield a dehydro-cyclodipeptide intermediate. The FAD-dependent monooxygenase ankC then installs the m-OH, ankD catalyzes the attachment of L-homoserine, and ankE ligates citrate to the ankD product to yield NK13650 B. The O-methyltransferase ankF is responsible for methylation of the C-17 phenol group of NK13650 B to produce NK13650 D. Amidation of NK13650 D with L-Asp by ankG then leads to the production of NK13650 C, whereas amidation of NK13650 B produces NK13650 A. In Aspergillus thermomutatus (Neosartorya pseudofischeri), this protein is FAD-dependent monooxygenase ankC.